Here is a 110-residue protein sequence, read N- to C-terminus: Eukaryotic translation initiation factor eIF1 (110 aa).

It belongs to the SUI1 family.

Probably involved in translation. This chain is Eukaryotic translation initiation factor eIF1, found in Anopheles gambiae (African malaria mosquito).